We begin with the raw amino-acid sequence, 352 residues long: Lipopolysaccharide core biosynthesis mannosyltransferase LpcC (352 aa).

It belongs to the glycosyltransferase group 1 family. Glycosyltransferase 4 subfamily.

The protein operates within bacterial outer membrane biogenesis; LPS core biosynthesis. Its function is as follows. Acts at transfer of mannose group to a 3-deoxy-D-mono octulonic acid (KDO) via an alpha-1,5 linkage. This is Lipopolysaccharide core biosynthesis mannosyltransferase LpcC (lpcC) from Rhizobium leguminosarum bv. viciae.